A 528-amino-acid polypeptide reads, in one-letter code: MNNNNNNRGRFPPGIGAAGPGPDPNFQSRNPNPPQPQQYLQSRTPFPQQPQPQPPQYLQSQSDAQQYVQRGYPQQIQQQQQLQQQQQQQQQQQEQQWSRRAQLPGDPSYIDEVEKTVQSEAISDSNNEDWKATLKLPPRDNRYQTEDVTATKGNEFEDYFLKRDLLRGIYEKGFEKPSPIQEESIPIALTGSDILARAKNGTGKTGAFCIPTLEKIDPENNVIQAVILVPTRELALQTSQVCKELSKYLKIEVMVTTGGTSLRDDIMRLYQPVHLLVGTPGRILDLAKKGVCVLKDCAMLVMDEADKLLSVEFQPSIEELIQFLPESRQILMFSATFPVTVKSFKDRYLKKPYIINLMDQLTLMGVTQYYAFVEERQKVHCLNTLFSKLQINQSIIFCNSVNRVELLAKKITELGYSCFYIHAKMVQDHRNRVFHDFRNGACRNLVCTDLFTRGIDIQAVNVVINFDFPRTSESYLHRVGRSGRFGHLGLAVNLVTYEDRFKMYQTEQELGTEIKPIPSLIDKAIYCQ.

2 stretches are compositionally biased toward low complexity: residues 1 to 15 (MNNNNNNRGRFPPGI) and 65 to 80 (QQYVQRGYPQQIQQQQ). Positions 1 to 80 (MNNNNNNRGR…GYPQQIQQQQ (80 aa)) are disordered. The short motif at 154 to 182 (NEFEDYFLKRDLLRGIYEKGFEKPSPIQE) is the Q motif element. The 171-residue stretch at 185 to 355 (IPIALTGSDI…DRYLKKPYII (171 aa)) folds into the Helicase ATP-binding domain. Position 198 to 205 (198 to 205 (AKNGTGKT)) interacts with ATP. Position 260 is a phosphothreonine (threonine 260). Positions 303–306 (DEAD) match the DEAD box motif. The region spanning 365–525 (GVTQYYAFVE…PIPSLIDKAI (161 aa)) is the Helicase C-terminal domain.

This sequence belongs to the DEAD box helicase family. DDX6/DHH1 subfamily.

It is found in the cytoplasm. The protein resides in the P-body. The catalysed reaction is ATP + H2O = ADP + phosphate + H(+). Its function is as follows. ATP-dependent RNA helicase involved in mRNA turnover, and more specifically in mRNA decapping. The chain is DEAD-box ATP-dependent RNA helicase 6 (RH6) from Arabidopsis thaliana (Mouse-ear cress).